The primary structure comprises 237 residues: Listeriolysin regulatory protein (237 aa).

The region spanning asparagine 137–aspartate 212 is the HTH crp-type domain.

Functionally, positively regulates expression of listeriolysin, of 1-phosphadidylinositol phosphodiesterase (PI-PLC) and other virulence factors. In Listeria monocytogenes serovar 1/2a (strain ATCC BAA-679 / EGD-e), this protein is Listeriolysin regulatory protein (prfA).